The sequence spans 266 residues: Chymotrypsin-like elastase family member 1 (266 aa).

A signal peptide spans 1–16 (MLRLLVFTSLVLYGHS). The propeptide at 17–26 (TQDFPETNAR) is activation peptide. One can recognise a Peptidase S1 domain in the interval 27–264 (VVGGTAVSKN…YISWINNAIA (238 aa)). Cysteine 56 and cysteine 72 form a disulfide bridge. Histidine 71 acts as the Charge relay system in catalysis. Ca(2+)-binding residues include aspartate 85, asparagine 87, glutamine 90, and glutamate 95. Asparagine 87 carries N-linked (GlcNAc...) asparagine glycosylation. Aspartate 119 (charge relay system) is an active-site residue. Intrachain disulfides connect cysteine 153–cysteine 220, cysteine 184–cysteine 200, and cysteine 210–cysteine 240. The active-site Charge relay system is serine 214. N-linked (GlcNAc...) asparagine glycosylation occurs at asparagine 241.

It belongs to the peptidase S1 family. Elastase subfamily. It depends on Ca(2+) as a cofactor. As to expression, pancreas.

It is found in the secreted. The enzyme catalyses Hydrolysis of proteins, including elastin. Preferential cleavage: Ala-|-Xaa.. Serine proteases that hydrolyze many proteins in addition to elastin. In Bos taurus (Bovine), this protein is Chymotrypsin-like elastase family member 1 (CELA1).